Reading from the N-terminus, the 375-residue chain is Monocyte differentiation antigen CD14 (375 aa).

The N-terminal stretch at 1 to 19 (MERASCLLLLLLPLVHVSA) is a signal peptide. 2 disulfides stabilise this stretch: cysteine 25/cysteine 36 and cysteine 34/cysteine 51. Asparagine 37 carries N-linked (GlcNAc...) asparagine glycosylation. LRR repeat units lie at residues 54–82 (AVEV…PRQY), 83–118 (ADTV…YSRL), 119–144 (KELT…GLAL), 145–172 (SSLR…KPGL), 173–196 (KVLS…FPAL), 197–224 (TSLD…FPAI), 225–251 (QNLA…GVQP), 252–278 (HSLD…SSAL), 279–299 (NSLN…PAKL), 300–321 (RVLD…LPEV), and 322–349 (DNLT…SGVV). N-linked (GlcNAc...) asparagine glycosylation is present at asparagine 151. Disulfide bonds link cysteine 187–cysteine 217 and cysteine 241–cysteine 272. N-linked (GlcNAc...) asparagine glycosylation is present at asparagine 282. A required for response to bacterial lipopolysaccharide (LPS) region spans residues 290–375 (QVPKGLPAKL…VLLQGARGFA (86 aa)). A glycan (N-linked (GlcNAc...) asparagine) is linked at asparagine 323. O-linked (GalNAc...) threonine glycosylation occurs at threonine 336. The GPI-anchor amidated asparagine moiety is linked to residue asparagine 345. A propeptide spans 346 to 375 (SGVVPACARSTLSVGVSGTLVLLQGARGFA) (removed in mature form).

In terms of assembly, interacts with LPS-bound LPB. Belongs to the lipopolysaccharide (LPS) receptor, a multi-protein complex containing at least CD14, LY96 and TLR4. Interacts with LPAR1. Interacts with the TLR2:TLR6 or TLR2:TLR1 heterodimers; upon interaction with ligands such as diacylated lipopeptides and triacylated lipopeptides, respectively. Interacts with MYO18A. Interacts with FSTL1. N- and O- glycosylated. O-glycosylated with a core 1 or possibly core 8 glycan. In terms of tissue distribution, detected on macrophages (at protein level). Expressed strongly on the surface of monocytes and weakly on the surface of granulocytes; also expressed by most tissue macrophages.

The protein resides in the cell membrane. Its subcellular location is the secreted. It localises to the membrane raft. It is found in the golgi apparatus. Coreceptor for bacterial lipopolysaccharide. In concert with LBP, binds to monomeric lipopolysaccharide and delivers it to the LY96/TLR4 complex, thereby mediating the innate immune response to bacterial lipopolysaccharide (LPS). Acts via MyD88, TIRAP and TRAF6, leading to NF-kappa-B activation, cytokine secretion and the inflammatory response. Acts as a coreceptor for TLR2:TLR6 heterodimer in response to diacylated lipopeptides and for TLR2:TLR1 heterodimer in response to triacylated lipopeptides, these clusters trigger signaling from the cell surface and subsequently are targeted to the Golgi in a lipid-raft dependent pathway. Binds electronegative LDL (LDL(-)) and mediates the cytokine release induced by LDL(-). In Homo sapiens (Human), this protein is Monocyte differentiation antigen CD14 (CD14).